Here is a 117-residue protein sequence, read N- to C-terminus: Large ribosomal subunit protein bL20 (117 aa).

This sequence belongs to the bacterial ribosomal protein bL20 family.

Functionally, binds directly to 23S ribosomal RNA and is necessary for the in vitro assembly process of the 50S ribosomal subunit. It is not involved in the protein synthesizing functions of that subunit. The protein is Large ribosomal subunit protein bL20 of Campylobacter hominis (strain ATCC BAA-381 / DSM 21671 / CCUG 45161 / LMG 19568 / NCTC 13146 / CH001A).